The sequence spans 968 residues: C-1-tetrahydrofolate synthase, cytoplasmic (968 aa).

The segment at 1 to 338 (MSAQYQRFLK…ERLAKSQWAL (338 aa)) is methylenetetrahydrofolate dehydrogenase and cyclohydrolase. Residues 86-90 (YIRMK) and 133-135 (VQM) each bind substrate. NADP(+) contacts are provided by residues 205-207 (GRS) and S230. 305–309 (PGGVG) serves as a coordination point for substrate. The tract at residues 339-968 (QTLPLKPQRP…TETGEIEGLF (630 aa)) is formyltetrahydrofolate synthetase. 413 to 420 (TPLGEGKT) serves as a coordination point for ATP.

The protein in the N-terminal section; belongs to the tetrahydrofolate dehydrogenase/cyclohydrolase family. It in the C-terminal section; belongs to the formate--tetrahydrofolate ligase family. In terms of assembly, homodimer. As to expression, present in all tissues.

It is found in the cytoplasm. It carries out the reaction (6R)-5,10-methylene-5,6,7,8-tetrahydrofolate + NADP(+) = (6R)-5,10-methenyltetrahydrofolate + NADPH. It catalyses the reaction (6R)-5,10-methenyltetrahydrofolate + H2O = (6R)-10-formyltetrahydrofolate + H(+). The enzyme catalyses (6S)-5,6,7,8-tetrahydrofolate + formate + ATP = (6R)-10-formyltetrahydrofolate + ADP + phosphate. It functions in the pathway one-carbon metabolism; tetrahydrofolate interconversion. The sequence is that of C-1-tetrahydrofolate synthase, cytoplasmic (pug) from Drosophila melanogaster (Fruit fly).